Consider the following 778-residue polypeptide: Tubulin polyglutamylase ttll6 (778 aa).

A disordered region spans residues 1 to 43; that stretch reads MGTPAERSVSEVCRCEPDPGLEGEGWGSDTHAEPSNTPIPLPV. One can recognise a TTL domain in the interval 51 to 393; sequence KKKLWINLTN…LGACDRRKIT (343 aa). ATP-binding positions include lysine 168, 174 to 175, 196 to 199, and 209 to 211; these read QG, QVYM, and KFD. Glutamine 174 serves as a coordination point for a protein. Residue arginine 235 participates in L-glutamate binding. 257 to 258 serves as a coordination point for ATP; sequence TN. Residues tyrosine 259 and lysine 277 each coordinate L-glutamate. Positions 340, 353, and 355 each coordinate Mg(2+). Residue histidine 356 coordinates a protein. Residues 365-445 are c-MTBD region; it reads RLDREVKDSL…MGGFRRIFPR (81 aa). Lysine 371 provides a ligand contact to L-glutamate. Basic and acidic residues-rich tracts occupy residues 402-418, 485-510, 533-542, and 760-778; these read ERLQ…EEPR, KQEQ…GEKV, SVREETPVSL, and LSHD…EHSL. 3 disordered regions span residues 402–422, 485–542, and 758–778; these read ERLQ…QSQA, KQEQ…PVSL, and PHLS…EHSL.

This sequence belongs to the tubulin--tyrosine ligase family. It depends on Mg(2+) as a cofactor.

The protein resides in the cytoplasm. The protein localises to the cytoskeleton. It localises to the cilium axoneme. Its subcellular location is the cilium basal body. It catalyses the reaction L-glutamyl-[protein] + L-glutamate + ATP = gamma-L-glutamyl-L-glutamyl-[protein] + ADP + phosphate + H(+). The enzyme catalyses (L-glutamyl)(n)-gamma-L-glutamyl-L-glutamyl-[protein] + L-glutamate + ATP = (L-glutamyl)(n+1)-gamma-L-glutamyl-L-glutamyl-[protein] + ADP + phosphate + H(+). In terms of biological role, polyglutamylase which modifies both tubulin and non-tubulin proteins, generating alpha-linked polyglutamate side chains on the gamma-carboxyl group of specific glutamate residues of target proteins. Preferentially mediates ATP-dependent long polyglutamate chain elongation over the initiation step of the polyglutamylation reaction. Preferentially modifies the alpha-tubulin tail over a beta-tail. Mediates microtubule polyglutamylation in cilia axoneme, which is important for ciliary structural formation and motility. Polyglutamylates olfactory cilia, necessary for the regulation of ciliary structure and beating. In Danio rerio (Zebrafish), this protein is Tubulin polyglutamylase ttll6.